The chain runs to 443 residues: D-serine dehydratase (443 aa).

Position 118 is an N6-(pyridoxal phosphate)lysine (K118).

Belongs to the serine/threonine dehydratase family. DsdA subfamily. As to quaternary structure, monomer. Requires pyridoxal 5'-phosphate as cofactor.

The enzyme catalyses D-serine = pyruvate + NH4(+). The chain is D-serine dehydratase from Escherichia coli O17:K52:H18 (strain UMN026 / ExPEC).